The primary structure comprises 217 residues: MRAVLLGAPGSGKGTQGERLSQQYGIPQVSTGDLLRAAVAAGSELGKQAKAAMDAGELVSDQIVIGIIRERLTQPDAAKGYILDGFPRNFTQAQALDEMLATLERPLQAIILLDVNFEVLMRRLTGRRTCQACGAIYNIYFSPPEVDHRCDKCNSDQLVQRSDDNEETISNRLRVYEAQTAPLVDYYEAQGKLYKVDGEDDITKIAKNIGQILETAR.

10–15 (GSGKGT) contacts ATP. Positions 30–59 (STGDLLRAAVAAGSELGKQAKAAMDAGELV) are NMP. Residues Thr31, Arg36, 57-59 (ELV), 85-88 (GFPR), and Gln92 each bind AMP. Residues 126–164 (GRRTCQACGAIYNIYFSPPEVDHRCDKCNSDQLVQRSDD) form an LID region. Arg127 provides a ligand contact to ATP. Zn(2+)-binding residues include Cys130 and Cys133. An ATP-binding site is contributed by 136–137 (IY). Residues Cys150 and Cys153 each contribute to the Zn(2+) site. Residues Arg161 and Arg172 each contribute to the AMP site. ATP is bound at residue Asp200.

Belongs to the adenylate kinase family. As to quaternary structure, monomer.

It is found in the cytoplasm. It catalyses the reaction AMP + ATP = 2 ADP. It participates in purine metabolism; AMP biosynthesis via salvage pathway; AMP from ADP: step 1/1. In terms of biological role, catalyzes the reversible transfer of the terminal phosphate group between ATP and AMP. Plays an important role in cellular energy homeostasis and in adenine nucleotide metabolism. This Nitrosococcus oceani (strain ATCC 19707 / BCRC 17464 / JCM 30415 / NCIMB 11848 / C-107) protein is Adenylate kinase.